We begin with the raw amino-acid sequence, 267 residues long: Apolipoprotein A-I (267 aa).

A signal peptide spans 1-18; that stretch reads MKAAVLTLAVLFLTGSQA. 2 repeat units span residues 68–89 and 90–111. The 10 X approximate tandem repeats stretch occupies residues 68-267; it reads LKLLDNWDSM…EEYTKKLNTQ (200 aa). Methionine 110 is modified (methionine sulfoxide). A 3; half-length repeat occupies 112 to 122; sequence KDLEEVKAKVQ. 5 tandem repeats follow at residues 123–144, 145–166, 167–188, 189–210, and 211–232. Methionine sulfoxide is present on methionine 136. Residues 233–243 form a 9; half-length repeat; sequence PALEDLRQGLL. The stretch at 244–267 is repeat 10; the sequence is PVLESFKVSFLSALEEYTKKLNTQ.

This sequence belongs to the apolipoprotein A1/A4/E family. In terms of assembly, homodimer. Interacts with APOA1BP and CLU. Component of a sperm activating protein complex (SPAP), consisting of APOA1, an immunoglobulin heavy chain, an immunoglobulin light chain and albumin. Interacts with NDRG1. Interacts with SCGB3A2. Interacts with NAXE and YJEFN3. Glycosylated. Post-translationally, palmitoylated. As to expression, major protein of plasma HDL, also found in chylomicrons.

It is found in the secreted. In terms of biological role, participates in the reverse transport of cholesterol from tissues to the liver for excretion by promoting cholesterol efflux from tissues and by acting as a cofactor for the lecithin cholesterol acyltransferase (LCAT). As part of the SPAP complex, activates spermatozoa motility. In Pongo abelii (Sumatran orangutan), this protein is Apolipoprotein A-I (APOA1).